We begin with the raw amino-acid sequence, 484 residues long: L-amino-acid oxidase (484 aa).

A disulfide bridge connects residues Cys8 and Cys171. Residues 41-42 (MS), 61-62 (EA), and Arg69 each bind FAD. His73 lines the Zn(2+) pocket. An FAD-binding site is contributed by 85-88 (GPMR). Residue Arg88 participates in substrate binding. Asn170 is a glycosylation site (N-linked (GlcNAc...) asparagine). Residue His221 participates in substrate binding. Residue Val259 participates in FAD binding. Glu277 serves as a coordination point for Zn(2+). An intrachain disulfide couples Cys329 to Cys410. Tyr370 contacts substrate. FAD-binding positions include Glu455 and 462–467 (GWIDST). A substrate-binding site is contributed by 462–463 (GW).

It belongs to the flavin monoamine oxidase family. FIG1 subfamily. In terms of assembly, homodimer; non-covalently linked. It depends on FAD as a cofactor. Expressed by the venom gland.

The protein resides in the secreted. The catalysed reaction is an L-alpha-amino acid + O2 + H2O = a 2-oxocarboxylate + H2O2 + NH4(+). Its function is as follows. Catalyzes an oxidative deamination of predominantly hydrophobic and aromatic L-amino acids, thus producing hydrogen peroxide that may contribute to the diverse toxic effects of this enzyme. Exhibits diverse biological activities, such as hemorrhage, hemolysis, edema, apoptosis of vascular endothelial cells or tumor cell lines, antibacterial and antiparasitic activities, as well as regulation of platelet aggregation. Effects of snake L-amino oxidases on platelets are controversial, since they either induce aggregation or inhibit agonist-induced aggregation. These different effects are probably due to different experimental conditions. This chain is L-amino-acid oxidase, found in Vipera ammodytes ammodytes (Western sand viper).